A 218-amino-acid polypeptide reads, in one-letter code: Small ribosomal subunit protein uS3c (218 aa).

The KH type-2 domain maps to 43 to 118 (IKNYVQKNMK…KLNISITRIE (76 aa)).

The protein belongs to the universal ribosomal protein uS3 family. Part of the 30S ribosomal subunit.

Its subcellular location is the plastid. The protein resides in the chloroplast. The polypeptide is Small ribosomal subunit protein uS3c (rps3) (Populus alba (White poplar)).